A 258-amino-acid polypeptide reads, in one-letter code: MGVEKIIAAFENGKKAFIPYVMGGDGGLEKLKERIRFLDEAGASIVEIGIPFSDPVADGPTIQRAGKRALDSGVTLKGIFQALIEVRQEVQIPFVLMTYLNPVLAFGKERFIESCLEAGVDGIIVPDLPYEEQDIIAPLLRVANIALIPLVTVTSPIERIEKITSESQGFVYAVTVAGVTGVRQNFKDEIRSYLEKVKEHVHLPVVAGFGISTREQIEEMITICDGVVVGSKVIELLENEKREEICELIHAVKETEEA.

Catalysis depends on proton acceptor residues Glu-47 and Asp-58.

It belongs to the TrpA family. As to quaternary structure, tetramer of two alpha and two beta chains.

The catalysed reaction is (1S,2R)-1-C-(indol-3-yl)glycerol 3-phosphate + L-serine = D-glyceraldehyde 3-phosphate + L-tryptophan + H2O. It participates in amino-acid biosynthesis; L-tryptophan biosynthesis; L-tryptophan from chorismate: step 5/5. The alpha subunit is responsible for the aldol cleavage of indoleglycerol phosphate to indole and glyceraldehyde 3-phosphate. This Bacillus mycoides (strain KBAB4) (Bacillus weihenstephanensis) protein is Tryptophan synthase alpha chain.